Here is a 61-residue protein sequence, read N- to C-terminus: Probradykinin-2 (61 aa).

An N-terminal signal peptide occupies residues 1-22; sequence MSFLKKSLFLVLFLGLVSFSIC. Positions 23-50 are excised as a propeptide; sequence EEEKRETEEEENEDEIEEQSEEKKRFEP. Residues 24–61 are disordered; sequence EEKRETEEEENEDEIEEQSEEKKRFEPVPPGFTPFRQT. Residues 30 to 42 show a composition bias toward acidic residues; it reads EEEENEDEIEEQS. Pro52 is modified (4-hydroxyproline).

This sequence belongs to the frog skin active peptide (FSAP) family. Bradykinin-related peptide subfamily. In terms of tissue distribution, expressed by the skin glands.

Its subcellular location is the secreted. May produce in vitro relaxation of rat arterial smooth muscle and constriction of intestinal smooth muscle. May target bradykinin receptors (BDKRB). This chain is Probradykinin-2, found in Pithecopus azureus (Orange-legged monkey tree frog).